We begin with the raw amino-acid sequence, 131 residues long: UPF0102 protein AZC_4471 (131 aa).

It belongs to the UPF0102 family.

This is UPF0102 protein AZC_4471 from Azorhizobium caulinodans (strain ATCC 43989 / DSM 5975 / JCM 20966 / LMG 6465 / NBRC 14845 / NCIMB 13405 / ORS 571).